Here is a 215-residue protein sequence, read N- to C-terminus: Glutathione S-transferase stcT (215 aa).

A GST N-terminal domain is found at 2-82 (PFGTLYTRPF…YDSNTTLLGT (81 aa)). Glutathione-binding residues include lysine 52 and glutamate 66. Lysine 52 is a binding site for substrate. Residues 83 to 211 (TGQEYASIIR…PVLAEYEMPI (129 aa)) form the GST C-terminal domain.

Belongs to the GST superfamily. Glutathione serves as cofactor.

It participates in mycotoxin biosynthesis; sterigmatocystin biosynthesis. Glutathione S-transferase; part of the gene cluster that mediates the biosynthesis of sterigmatocystin (ST), a polyketide-derived furanocoumarin which is part of the most toxic and carcinogenic compounds among the known mycotoxins. The first step in the biosynthesis of sterigmatocystin is the production of hexanoate by the fatty acid synthase (FAS) units stcJ and stcK. The polyketide backbone is assembled by the non-reducing polyketide synthase stcA by condensation of the starter hexanoyl-CoA and 7 malonyl-CoA extender units followed by cyclization and release of norsolorinic acid. Norsolorinic acid is the first stable intermediate in the biosynthesis of sterigmatocystin and is converted into averantin (AVN) by the ketoreductase stcE which reduces the hexanoate ketone to an alcohol. Averantin is then oxidized into 5'-hydroxyaverantin (HAVN) by the cytochrome P450 monooxygenase stcF. 5'-hydroxyaverantin is further converted to 5'-oxyaverantin (OAVN) by the 5'-hydroxyaverantin dehydrogenase stcG. The next step is the conversion of OAVN into averufin (AVF) which is catalyzed by a yet to be identified enzyme. The cytochrome P450 monooxygenase stcB and the flavin-binding monooxygenase stcW are both required for the conversion of averufin to 1-hydroxyversicolorone. The esterase stcI probably catalyzes the formation of versiconal hemiacetal acetate from 1-hydroxyversicolorone. The oxydoreductase stcN then probably catalyzes the biosynthetic step from versiconal to versicolorin B (VERB). The next step is performed by the versicolorin B desaturase stcL to produce versicolorin A (VERA). The ketoreductase stcU and the cytochrome P450 monooxygenase stcS are involved in the conversion of versicolorin A to demethylsterigmatocystin. The Baeyer-Villiger oxidas stcQ and the reductase stcR might be involved in the biosynthetic step from versicolorin A to demethylsterigmatocystin. The final step in the biosynthesis of sterigmatocystin is the methylation of demethylsterigmatocystin catalyzed by the methyltransferase stcP. The polypeptide is Glutathione S-transferase stcT (Emericella nidulans (strain FGSC A4 / ATCC 38163 / CBS 112.46 / NRRL 194 / M139) (Aspergillus nidulans)).